We begin with the raw amino-acid sequence, 265 residues long: Urease accessory protein UreH (265 aa).

The protein belongs to the UreD family. In terms of assembly, ureH, UreF and UreG form a complex that acts as a GTP-hydrolysis-dependent molecular chaperone, activating the urease apoprotein by helping to assemble the nickel containing metallocenter of UreC. The UreE protein probably delivers the nickel.

It is found in the cytoplasm. In terms of biological role, required for maturation of urease via the functional incorporation of the urease nickel metallocenter. In Helicobacter pylori (strain P12), this protein is Urease accessory protein UreH.